We begin with the raw amino-acid sequence, 199 residues long: Probable GTP-binding protein EngB (199 aa).

The 172-residue stretch at 28-199 (DLPEVALAGR…EAWDTILAEL (172 aa)) folds into the EngB-type G domain. GTP contacts are provided by residues 36 to 43 (GRSNVGKS), 63 to 67 (GKTQL), 81 to 84 (DVPG), 148 to 151 (TKAD), and 180 to 182 (FSS). Mg(2+) contacts are provided by S43 and T65.

This sequence belongs to the TRAFAC class TrmE-Era-EngA-EngB-Septin-like GTPase superfamily. EngB GTPase family. The cofactor is Mg(2+).

Necessary for normal cell division and for the maintenance of normal septation. The chain is Probable GTP-binding protein EngB from Streptococcus thermophilus (strain CNRZ 1066).